We begin with the raw amino-acid sequence, 64 residues long: Temporin-ALh (64 aa).

Positions 1–22 are cleaved as a signal peptide; sequence MFPLKKSLLLLFFLATINLSLC. A propeptide spanning residues 23–46 is cleaved from the precursor; sequence EQERNAEEERRDEPDERNAEVEKR. Ser-62 bears the Serine amide mark.

It belongs to the frog skin active peptide (FSAP) family. Temporin subfamily. Expressed by the skin glands.

The protein localises to the secreted. Functionally, antimicrobial peptide with activity against Gram-positive and Gram-negative bacteria and against fungi. Has been tested against S.aureus (MIC=2.5 ug/mL), B.pumilus (MIC=7.5 ug/mL), B.cereus (MIC=75.0 ug/mL), E.coli (MIC=5.0 ug/mL), B.dysenteriae (MIC=20.0 ug/mL), A.cacoaceticus (MIC=60.0 ug/mL), P.aeruginosa (MIC=2.5 ug/mL) and C.albicans (MIC=2.5 ug/mL). Also shows a weak hemolytic activity. The protein is Temporin-ALh of Amolops loloensis (Lolokou Sucker Frog).